We begin with the raw amino-acid sequence, 280 residues long: 4-diphosphocytidyl-2-C-methyl-D-erythritol kinase (280 aa).

Residue Lys11 is part of the active site. 95–105 (PVGAGLGGGSS) provides a ligand contact to ATP. Residue Asp137 is part of the active site.

The protein belongs to the GHMP kinase family. IspE subfamily.

It carries out the reaction 4-CDP-2-C-methyl-D-erythritol + ATP = 4-CDP-2-C-methyl-D-erythritol 2-phosphate + ADP + H(+). It participates in isoprenoid biosynthesis; isopentenyl diphosphate biosynthesis via DXP pathway; isopentenyl diphosphate from 1-deoxy-D-xylulose 5-phosphate: step 3/6. Functionally, catalyzes the phosphorylation of the position 2 hydroxy group of 4-diphosphocytidyl-2C-methyl-D-erythritol. This Geobacter sp. (strain M21) protein is 4-diphosphocytidyl-2-C-methyl-D-erythritol kinase.